The following is a 215-amino-acid chain: Chaperone protein TorD (215 aa).

It belongs to the TorD/DmsD family. TorD subfamily.

Its subcellular location is the cytoplasm. Functionally, involved in the biogenesis of TorA. Acts on TorA before the insertion of the molybdenum cofactor and, as a result, probably favors a conformation of the apoenzyme that is competent for acquiring the cofactor. The polypeptide is Chaperone protein TorD (Vibrio parahaemolyticus serotype O3:K6 (strain RIMD 2210633)).